The primary structure comprises 466 residues: Ribulose bisphosphate carboxylase large chain (466 aa).

N6,N6,N6-trimethyllysine is present on Lys4. The substrate site is built by Asn113 and Thr163. Lys165 (proton acceptor) is an active-site residue. Substrate is bound at residue Lys167. Mg(2+)-binding residues include Lys191, Asp193, and Glu194. Lys191 is modified (N6-carboxylysine). His284 acts as the Proton acceptor in catalysis. Substrate contacts are provided by Arg285, His317, and Ser369.

Belongs to the RuBisCO large chain family. Type I subfamily. In terms of assembly, heterohexadecamer of 8 large chains and 8 small chains; disulfide-linked. The disulfide link is formed within the large subunit homodimers. It depends on Mg(2+) as a cofactor. In terms of processing, the disulfide bond which can form in the large chain dimeric partners within the hexadecamer appears to be associated with oxidative stress and protein turnover.

The protein resides in the plastid. Its subcellular location is the chloroplast. The enzyme catalyses 2 (2R)-3-phosphoglycerate + 2 H(+) = D-ribulose 1,5-bisphosphate + CO2 + H2O. It carries out the reaction D-ribulose 1,5-bisphosphate + O2 = 2-phosphoglycolate + (2R)-3-phosphoglycerate + 2 H(+). Functionally, ruBisCO catalyzes two reactions: the carboxylation of D-ribulose 1,5-bisphosphate, the primary event in carbon dioxide fixation, as well as the oxidative fragmentation of the pentose substrate in the photorespiration process. Both reactions occur simultaneously and in competition at the same active site. The chain is Ribulose bisphosphate carboxylase large chain from Pinguicula caerulea (Blueflower butterwort).